The following is a 219-amino-acid chain: Ras-related protein RABA5d (219 aa).

Ser-2 bears the N-acetylserine mark. 19 to 26 (GDSAVGKS) is a binding site for GTP. Residues 41–49 (SKATIGVEF) carry the Effector region motif. GTP-binding positions include 67-71 (DTAGQ), 125-128 (NKCD), and 155-156 (SA). 2 S-geranylgeranyl cysteine lipidation sites follow: Cys-215 and Cys-216.

The protein belongs to the small GTPase superfamily. Rab family.

It localises to the cell membrane. Its function is as follows. Intracellular vesicle trafficking and protein transport. This chain is Ras-related protein RABA5d (RABA5D), found in Arabidopsis thaliana (Mouse-ear cress).